Reading from the N-terminus, the 306-residue chain is MIFQRTVQKMVKTTGVGLHSGNKVTLSIMPAPVNSGIVLVRTDLSPAVAIPAKAEQVRETTMCTALVNDEGIRISTIEHLFAALAGLGIDNAVIEVDAPEIPIMDGSASPFVFLLQSAGIKEQAAPKKYLKIKRPVRVEDGDKWAELKPFKGFRVNFKIDFAHPEIARSQQHVVMDFSTSAFVKDISRARTFGFMRDIEYLRANNLALGGSMENAVVLDEYRVLNPDGLRYEDEFVKHKILDAFGDLYVAGHAILGEFTAYKTGHALNNQLVRALLAQQDAWELVSFEKEADVPVSFTVPGGAVFA.

Histidine 79, histidine 238, and aspartate 242 together coordinate Zn(2+). Histidine 265 functions as the Proton donor in the catalytic mechanism.

Belongs to the LpxC family. Requires Zn(2+) as cofactor.

The catalysed reaction is a UDP-3-O-[(3R)-3-hydroxyacyl]-N-acetyl-alpha-D-glucosamine + H2O = a UDP-3-O-[(3R)-3-hydroxyacyl]-alpha-D-glucosamine + acetate. It functions in the pathway glycolipid biosynthesis; lipid IV(A) biosynthesis; lipid IV(A) from (3R)-3-hydroxytetradecanoyl-[acyl-carrier-protein] and UDP-N-acetyl-alpha-D-glucosamine: step 2/6. Functionally, catalyzes the hydrolysis of UDP-3-O-myristoyl-N-acetylglucosamine to form UDP-3-O-myristoylglucosamine and acetate, the committed step in lipid A biosynthesis. The chain is UDP-3-O-acyl-N-acetylglucosamine deacetylase from Shewanella baltica (strain OS223).